Here is a 257-residue protein sequence, read N- to C-terminus: uncharacterized protein (257 aa).

The helical transmembrane segment at 6–26 threads the bilayer; it reads IFWLNLAAIIIISIVVSGDMF.

It belongs to the staphylococcal tandem lipoprotein family.

Its subcellular location is the cell membrane. This is an uncharacterized protein from Staphylococcus aureus (strain NCTC 8325 / PS 47).